The primary structure comprises 161 residues: Ubiquitin-conjugating enzyme E2Q-like protein 1 (161 aa).

Residues 1–154 (MKELQDIARL…VKTHEKYGWV (154 aa)) enclose the UBC core domain. C88 serves as the catalytic Glycyl thioester intermediate.

It belongs to the ubiquitin-conjugating enzyme family. In terms of assembly, interacts with FBXW7.

Its subcellular location is the nucleus. It carries out the reaction S-ubiquitinyl-[E1 ubiquitin-activating enzyme]-L-cysteine + [E2 ubiquitin-conjugating enzyme]-L-cysteine = [E1 ubiquitin-activating enzyme]-L-cysteine + S-ubiquitinyl-[E2 ubiquitin-conjugating enzyme]-L-cysteine.. Its pathway is protein modification; protein ubiquitination. Probable E2 ubiquitin-protein ligase that catalyzes the covalent attachment of ubiquitin to target proteins. May facilitate the monoubiquitination and degradation of MTOR and CCNE1 through interaction with FBXW7. The protein is Ubiquitin-conjugating enzyme E2Q-like protein 1 (Ube2ql1) of Mus musculus (Mouse).